Reading from the N-terminus, the 486-residue chain is MACKSPAGAPFEYRIADINLHVLGRKELTLAEKEMPGLMVLRERYSASKPLKGVRISGSLHMTVQTAVLIETLTALGADVRWASCNIFSTQDTAAAAIVVGPTGTPEKPAGIPVFAWKGETLPEYWENTYRALTWPDGQGPQQVVDDGGDATLLISKGFEFETAGAVPEPTEADNLEYRCVLATLKQVFNQDKNHWHTVAAGMNGVSEETTTGVHRLYQLEKEGKLLFPAINVNDAVTKSKFDNIYGCRHSLIDGINRASDVMIGGKTALVMGYGDVGKGCAQSLRGQGARVIITEVDPICALQAVMEGYQVRRIEEVVKDVDIFVTCTGNCDIISVDMMAQMKDKAIVGNIGHFDNEIDTDGLMKYPGIKHIPIKPEYDMWEFPDGHAILLLAEGRLLNLGCATGHPSFVMSMSFTNQTLAQLDLYEKRGNLEMKVYTLPKHLDEEVVRLHLGSLDVHLTKLTQKQADYINVPVEGPYKSDAYRY.

T63, D147, and E209 together coordinate substrate. Residue 210-212 (TTT) coordinates NAD(+). 2 residues coordinate substrate: K239 and D243. Residues N244, 273–278 (GYGDVG), E296, N331, 352–354 (IGH), and N400 each bind NAD(+).

The protein belongs to the adenosylhomocysteinase family. The cofactor is NAD(+).

The enzyme catalyses S-adenosyl-L-homocysteine + H2O = L-homocysteine + adenosine. Its pathway is amino-acid biosynthesis; L-homocysteine biosynthesis; L-homocysteine from S-adenosyl-L-homocysteine: step 1/1. Its function is as follows. Adenosylhomocysteine is a competitive inhibitor of S-adenosyl-L-methionine-dependent methyl transferase reactions; therefore adenosylhomocysteinase may play a key role in the control of methylations via regulation of the intracellular concentration of adenosylhomocysteine. This is Adenosylhomocysteinase from Trichomonas vaginalis.